Consider the following 374-residue polypeptide: 5-methylthioribulose-1-phosphate isomerase (374 aa).

The protein belongs to the RuBisCO large chain family. Type IV subfamily.

The enzyme catalyses 5-(methylsulfanyl)-D-ribulose 1-phosphate = S-methyl-1-thio-D-xylulose 5-phosphate. It carries out the reaction 5-(methylsulfanyl)-D-ribulose 1-phosphate = 1-(methylsulfanyl)ribulose 5-phosphate. Its pathway is amino-acid biosynthesis; L-methionine biosynthesis via salvage pathway. It functions in the pathway metabolic intermediate biosynthesis; 1-deoxy-D-xylulose 5-phosphate biosynthesis. Its function is as follows. Catalyzes the conversion of 5-methylthio-D-ribulose 1-phosphate (MTRu-1P) to a 3:1 mixture of 1-methylthioxylulose 5-phosphate (MTXu-5P) and 1-methylthioribulose 5-phosphate (MTRu-5P). Involved in the MTA-isoprenoid shunt of the methionine salvage pathway. The polypeptide is 5-methylthioribulose-1-phosphate isomerase (Rhodospirillum rubrum (strain ATCC 11170 / ATH 1.1.1 / DSM 467 / LMG 4362 / NCIMB 8255 / S1)).